Here is a 499-residue protein sequence, read N- to C-terminus: Sensor histidine kinase VxrA (499 aa).

Residues 1-12 lie on the Cytoplasmic side of the membrane; sequence MRYSFCMLEKTN. A helical membrane pass occupies residues 13–31; sequence IPLIRALNLTLVSLCFAML. The Periplasmic segment spans residues 32 to 257; sequence PNPVHADSLP…ICWDVEDHSD (226 aa). Intrachain disulfides connect Cys-101–Cys-122 and Cys-241–Cys-249. Residues 258-280 traverse the membrane as a helical segment; sequence LLRTSMIILVIANIFLVLGWSGY. At 281–499 the chain is on the cytoplasmic side; the sequence is RWNSKRQEMR…IPCETDTASR (219 aa). In terms of domain architecture, Histidine kinase spans 298–494; sequence ILTHELRTPI…TFILEIPCET (197 aa). His-301 carries the post-translational modification Phosphohistidine; by autocatalysis.

As to quaternary structure, homodimer. In terms of processing, autophosphorylated. Contains two disulfide bonds that may play a role in the stability of the protein. However, the disulfide bonds are not absolutely essential, as some activity and growth are detected in the absence of each disulfide bond.

It is found in the cell inner membrane. It catalyses the reaction ATP + protein L-histidine = ADP + protein N-phospho-L-histidine.. Member of the two-component regulatory system VxrB/VxrA involved in the regulation of diverses processes, including virulence, the type VI secretion system (T6SS) and biofilm formation. Functions as a sensor protein kinase which is autophosphorylated at a histidine residue and transfers its phosphate group to the conserved aspartic acid residue in the regulatory domain of VxrB. Is critical for colonization in the infant mouse model. Contributes to the resistance to beta-lactam treatment. The sequence is that of Sensor histidine kinase VxrA from Vibrio cholerae serotype O1 (strain ATCC 39315 / El Tor Inaba N16961).